A 127-amino-acid polypeptide reads, in one-letter code: Large ribosomal subunit protein uL22 (127 aa).

Belongs to the universal ribosomal protein uL22 family. As to quaternary structure, part of the 50S ribosomal subunit.

In terms of biological role, this protein binds specifically to 23S rRNA; its binding is stimulated by other ribosomal proteins, e.g. L4, L17, and L20. It is important during the early stages of 50S assembly. It makes multiple contacts with different domains of the 23S rRNA in the assembled 50S subunit and ribosome. Its function is as follows. The globular domain of the protein is located near the polypeptide exit tunnel on the outside of the subunit, while an extended beta-hairpin is found that lines the wall of the exit tunnel in the center of the 70S ribosome. The sequence is that of Large ribosomal subunit protein uL22 from Rhizorhabdus wittichii (strain DSM 6014 / CCUG 31198 / JCM 15750 / NBRC 105917 / EY 4224 / RW1) (Sphingomonas wittichii).